Reading from the N-terminus, the 402-residue chain is Zinc finger protein 809 (402 aa).

The region spanning 4 to 75 is the KRAB domain; that stretch reads VSFEDVAVDF…AEASSRSLPG (72 aa). The disordered stretch occupies residues 118-139; sequence QEVSKGTTSRHRRAPVKSLCRK. A compositionally biased stretch (basic residues) spans 125-139; the sequence is TSRHRRAPVKSLCRK. 7 consecutive C2H2-type zinc fingers follow at residues 155–178, 184–206, 213–235, 241–263, 269–291, 297–319, and 325–347; these read YECK…RRTH, YECD…QKTH, YECS…ERTH, YECT…KKTH, FKCE…QKKH, YECT…RIAH, and YECK…QKRH.

This sequence belongs to the krueppel C2H2-type zinc-finger protein family.

The protein resides in the nucleus. In terms of biological role, transcription factor specifically required to repress retrotransposons in embryonic stem cells. Recognizes and binds retroviral DNA sequences from a large subset of mammalian retroviruses and retroelements and repress their expression by recruiting a repressive complex containing TRIM28/KAP1. This chain is Zinc finger protein 809, found in Mus musculus (Mouse).